Here is a 275-residue protein sequence, read N- to C-terminus: Interleukin-2 receptor subunit alpha (275 aa).

A signal peptide spans 1–21; the sequence is MEPSLLMWRFFVFIVVPGCVT. Sushi domains lie at 22–81 and 121–186; these read EACH…FCNS and GHCE…KCIS. Over 22 to 243 the chain is Extracellular; the sequence is EACHDDPPSL…DTFIFTTEYQ (222 aa). 3 disulfide bridges follow: C24/C64, C49/C77, and C51/C79. N80 carries N-linked (GlcNAc...) asparagine glycosylation. A disordered region spans residues 86 to 130; it reads KNPVKPVTPGSEEQRERKPTDAQSQTQPPEQADLPGHCEEPPPWE. Over residues 121 to 130 the composition is skewed to basic and acidic residues; it reads GHCEEPPPWE. 2 disulfides stabilise this stretch: C123-C168 and C152-C184. The segment at 188–213 is disordered; that stretch reads GANSQAPDEAEPPESTEAPPGSGTFL. Residues 244-262 traverse the membrane as a helical segment; it reads IAVAGCILLLSSILLLSCL. The Cytoplasmic portion of the chain corresponds to 263-275; the sequence is TWQRRWKKNRRTI.

In terms of assembly, non-covalent dimer of an alpha and a beta subunit. IL2R exists in 3 different forms: a high affinity dimer, an intermediate affinity monomer (beta subunit), and a low affinity monomer (alpha subunit). The high and intermediate affinity forms also associate with a gamma subunit.

The protein resides in the membrane. In terms of biological role, receptor for interleukin-2. The receptor is involved in the regulation of immune tolerance by controlling regulatory T cells (TREGs) activity. TREGs suppress the activation and expansion of autoreactive T-cells. The chain is Interleukin-2 receptor subunit alpha (IL2RA) from Ovis aries (Sheep).